We begin with the raw amino-acid sequence, 144 residues long: Large ribosomal subunit protein uL15 (144 aa).

A disordered region spans residues 1–52 (MRLNTLSPANGARHSRKRLGRGIGSGFGKTSGRGHKGQKSRSGSSIRRGFEG). Gly residues predominate over residues 21–31 (RGIGSGFGKTS).

The protein belongs to the universal ribosomal protein uL15 family. As to quaternary structure, part of the 50S ribosomal subunit.

In terms of biological role, binds to the 23S rRNA. In Buchnera aphidicola subsp. Acyrthosiphon pisum (strain 5A), this protein is Large ribosomal subunit protein uL15.